We begin with the raw amino-acid sequence, 295 residues long: Acetylglutamate kinase (295 aa).

Substrate contacts are provided by residues 66 to 67 (GG), Arg88, and Asn193.

Belongs to the acetylglutamate kinase family. ArgB subfamily.

It localises to the cytoplasm. The enzyme catalyses N-acetyl-L-glutamate + ATP = N-acetyl-L-glutamyl 5-phosphate + ADP. The protein operates within amino-acid biosynthesis; L-arginine biosynthesis; N(2)-acetyl-L-ornithine from L-glutamate: step 2/4. Catalyzes the ATP-dependent phosphorylation of N-acetyl-L-glutamate. This is Acetylglutamate kinase from Rhizobium leguminosarum bv. trifolii (strain WSM2304).